Consider the following 89-residue polypeptide: Small ribosomal subunit protein uS17 (89 aa).

The protein belongs to the universal ribosomal protein uS17 family. Part of the 30S ribosomal subunit.

Its function is as follows. One of the primary rRNA binding proteins, it binds specifically to the 5'-end of 16S ribosomal RNA. The protein is Small ribosomal subunit protein uS17 of Polaromonas naphthalenivorans (strain CJ2).